Consider the following 202-residue polypeptide: Inner membrane-spanning protein YciB (202 aa).

6 helical membrane-spanning segments follow: residues 3–23 (ILFD…AGGN), 46–66 (ILLA…WVWM), 73–93 (TMLW…LFFH), 100–120 (WKPT…AVIF), 145–165 (LAWA…AYNF), and 173–193 (FKLF…GFYL).

It belongs to the YciB family.

The protein resides in the cell inner membrane. Plays a role in cell envelope biogenesis, maintenance of cell envelope integrity and membrane homeostasis. The sequence is that of Inner membrane-spanning protein YciB from Aromatoleum aromaticum (strain DSM 19018 / LMG 30748 / EbN1) (Azoarcus sp. (strain EbN1)).